The primary structure comprises 877 residues: Translation initiation factor IF-2 (877 aa).

A compositionally biased stretch (basic and acidic residues) spans 66–115 (PKKESTAKKTTKKDEVKKEEKKTTTKKESKNPAKAVSEKKDEVKKEEKQP). 3 disordered regions span residues 66–127 (PKKE…LEEK), 187–208 (SDESLKRKKKEKKNHPVASKKE), and 241–290 (ENKP…KESE). The span at 192–201 (KRKKKEKKNH) shows a compositional bias: basic residues. Residues 245 to 265 (AQPTNKKQPNILKQSLNNSIN) show a composition bias toward polar residues. Residues 376 to 543 (QRAPVITIMG…IVLLQADILE (168 aa)) enclose the tr-type G domain. Residues 385–392 (GHVDHGKT) are G1. 385 to 392 (GHVDHGKT) contacts GTP. Residues 410–414 (GITQH) are G2. The interval 431–434 (DTPG) is G3. GTP contacts are provided by residues 431 to 435 (DTPGH) and 485 to 488 (NKMD). The G4 stretch occupies residues 485–488 (NKMD). Positions 521–523 (SAK) are G5.

Belongs to the TRAFAC class translation factor GTPase superfamily. Classic translation factor GTPase family. IF-2 subfamily.

It is found in the cytoplasm. In terms of biological role, one of the essential components for the initiation of protein synthesis. Protects formylmethionyl-tRNA from spontaneous hydrolysis and promotes its binding to the 30S ribosomal subunits. Also involved in the hydrolysis of GTP during the formation of the 70S ribosomal complex. This is Translation initiation factor IF-2 from Campylobacter lari (strain RM2100 / D67 / ATCC BAA-1060).